Here is a 207-residue protein sequence, read N- to C-terminus: Large ribosomal subunit protein bL20 (207 aa).

Positions 117-161 (QETQPQPEEKTSLQPEKVLSTELSEEKSDDTLETKPQTTQVKAKK) are disordered. The segment covering 140–149 (SEEKSDDTLE) has biased composition (basic and acidic residues).

It belongs to the bacterial ribosomal protein bL20 family.

Its function is as follows. Binds directly to 23S ribosomal RNA and is necessary for the in vitro assembly process of the 50S ribosomal subunit. It is not involved in the protein synthesizing functions of that subunit. The sequence is that of Large ribosomal subunit protein bL20 from Onion yellows phytoplasma (strain OY-M).